A 507-amino-acid chain; its full sequence is MMTLKPGYLTLPQLRQIAREHVALQLDPASHAAIDACAQAVADIAAKGEPAYGINTGFGRLASTHIPHDQLELLQRNLVLSHAVGVGEPMSRPVVRLLIALKLSSLGRGHSGIRREVMEALITLYNADVLPVIPVKGSVGASGDLAPLAHMSATLLGVGEVFAKGERMPATEGLALVGLKPLTLQAKEGLALLNGTQASTALALYNMFAIEDLYRTALVSGALSVDAAMGSVKPFDARIHELRGHQGQIDAAGAYRSLLQGSGINVSHADCDKVQDPYSLRCQPQVMGACLDQMRHAANVLLLEANAVSDNPLIFPDTGEVLSGGNFHAEPVAFAADNLALAAAEIGALAERRIALLIDATLSGLPPFLVRDGGVNSGFMIAHVTAAALASENKTLAHPASVDSLPTSANQEDHVSMATFAARKLGDIAENTANILSIELLAAAQGVDLRAPHKTSPSLQKVMDAVRKDVAHYELDHYFAPDIAAVTRLVQDGTIAKLSPLSFASEQ.

Residues 141–143 constitute a cross-link (5-imidazolinone (Ala-Gly)); sequence ASG. The residue at position 142 (S142) is a 2,3-didehydroalanine (Ser).

The protein belongs to the PAL/histidase family. In terms of processing, contains an active site 4-methylidene-imidazol-5-one (MIO), which is formed autocatalytically by cyclization and dehydration of residues Ala-Ser-Gly.

The protein localises to the cytoplasm. The catalysed reaction is L-histidine = trans-urocanate + NH4(+). Its pathway is amino-acid degradation; L-histidine degradation into L-glutamate; N-formimidoyl-L-glutamate from L-histidine: step 1/3. The polypeptide is Histidine ammonia-lyase (Paraburkholderia phytofirmans (strain DSM 17436 / LMG 22146 / PsJN) (Burkholderia phytofirmans)).